The sequence spans 942 residues: tRNAse Z TRZ4, mitochondrial (942 aa).

Residues 1 to 50 (MLTSSMPQNLSLFGFSPLKSSSFALILRPFSLYPPIFASSSPAPSRRPPR) constitute a mitochondrion transit peptide. Residues 38–85 (ASSSPAPSRRPPRTAGYRRSGPSPPRRKWSSFEEQKRKGRSPMEKDKA) form a disordered region. Residues 67 to 85 (SSFEEQKRKGRSPMEKDKA) are compositionally biased toward basic and acidic residues.

This sequence belongs to the RNase Z family. Homodimer. The cofactor is Zn(2+). Requires Ca(2+) as cofactor. Mn(2+) serves as cofactor. Mg(2+) is required as a cofactor.

Its subcellular location is the mitochondrion. The enzyme catalyses Endonucleolytic cleavage of RNA, removing extra 3' nucleotides from tRNA precursor, generating 3' termini of tRNAs. A 3'-hydroxy group is left at the tRNA terminus and a 5'-phosphoryl group is left at the trailer molecule.. Its function is as follows. Zinc phosphodiesterase, which displays tRNA 3'-processing endonuclease activity. Involved in tRNA maturation, by removing a 3'-trailer from precursor tRNA. Can process the mitochondrial tRNA-like structures (t-elements). The sequence is that of tRNAse Z TRZ4, mitochondrial from Arabidopsis thaliana (Mouse-ear cress).